The primary structure comprises 78 residues: Ferredoxin (78 aa).

4Fe-4S ferredoxin-type domains follow at residues 2–29 (FVIT…HEGP) and 30–59 (DQYY…QEEF). Positions 8 and 16 each coordinate [3Fe-4S] cluster. 4 residues coordinate [4Fe-4S] cluster: cysteine 20, cysteine 39, cysteine 42, and cysteine 45. Cysteine 49 provides a ligand contact to [3Fe-4S] cluster.

[3Fe-4S] cluster is required as a cofactor. Requires [4Fe-4S] cluster as cofactor.

Its function is as follows. Ferredoxins are iron-sulfur proteins that transfer electrons in a wide variety of metabolic reactions. The polypeptide is Ferredoxin (Alicyclobacillus acidocaldarius subsp. acidocaldarius (Bacillus acidocaldarius)).